Reading from the N-terminus, the 1284-residue chain is Kinesin-like protein KIN-4C (1284 aa).

A Kinesin motor domain is found at 12-364 (SVKVVVNIRP…LKYANRARNI (353 aa)). 91–98 (GQTGSGKT) contacts ATP. 3 coiled-coil regions span residues 407–445 (SAAL…EQLA), 561–711 (RDHS…QFRS), and 911–950 (MCKE…NMLL). 2 disordered regions span residues 1040-1070 (RRQT…SQEK) and 1158-1284 (MSEK…NHLR). The segment covering 1043-1070 (TVSSHLNPNPGSGTTQKSAKSEMASQEK) has biased composition (polar residues). Composition is skewed to basic and acidic residues over residues 1158 to 1172 (MSEK…RKPL) and 1275 to 1284 (NANEKENHLR).

Belongs to the TRAFAC class myosin-kinesin ATPase superfamily. Kinesin family. KIN-4 subfamily. Homodimer.

In terms of biological role, microtubule-dependent motor protein involved in the control of the oriented deposition of cellulose microfibrils. This is Kinesin-like protein KIN-4C from Oryza sativa subsp. japonica (Rice).